Reading from the N-terminus, the 48-residue chain is ATP synthase protein 8 (48 aa).

The helical transmembrane segment at 13–32 (LTYGFLLMITLLILFSQFFL) threads the bilayer.

It belongs to the ATPase protein 8 family. F-type ATPases have 2 components, CF(1) - the catalytic core - and CF(0) - the membrane proton channel. In yeast, the dimeric form of ATP synthase consists of 17 polypeptides: alpha, beta, gamma, delta, epsilon, 4 (B), 5 (OSCP), 6 (A), 8, 9 (C), d, E (Tim11), f, g, h, i/j and k.

It localises to the mitochondrion membrane. In terms of biological role, mitochondrial membrane ATP synthase (F(1)F(0) ATP synthase or Complex V) produces ATP from ADP in the presence of a proton gradient across the membrane which is generated by electron transport complexes of the respiratory chain. F-type ATPases consist of two structural domains, F(1) - containing the extramembraneous catalytic core and F(0) - containing the membrane proton channel, linked together by a central stalk and a peripheral stalk. During catalysis, ATP synthesis in the catalytic domain of F(1) is coupled via a rotary mechanism of the central stalk subunits to proton translocation. Part of the complex F(0) domain. Minor subunit located with subunit a in the membrane. The polypeptide is ATP synthase protein 8 (ATP8) (Saccharomyces cerevisiae (strain ATCC 204508 / S288c) (Baker's yeast)).